Consider the following 407-residue polypeptide: CCCH-type zinc finger protein oma-1 (407 aa).

Residues 1–39 (MNVNGENNEKIDEHHLESSLAGVPTLPVSPLDHAKDLSQ) form a disordered region. Basic and acidic residues predominate over residues 7–17 (NNEKIDEHHLE). The segment at 46-80 (IGDLVTQTANLIAIKKQLLEDIAFNQHIQSMQVRA) is required for taf-4 binding. 2 consecutive C3H1-type zinc fingers follow at residues 112-140 (SYKT…HGEE) and 154-182 (KYKT…HPDH). Residue threonine 239 is modified to Phosphothreonine; by mbk-2 and GSK3. Phosphoserine; by mbk-2 is present on serine 302. Threonine 339 bears the Phosphothreonine; by GSK3 mark.

As to quaternary structure, interacts with taf-4 (via C-terminus). Interacts with ifet-1. Component of a ribonucleoprotein particle complex that interacts with cgh-1 and car-1 in an RNA-dependent manner. Association with many proteins is dependent on the presence of RNA. In terms of processing, phosphorylation by mbk-2 and by gsk-3 are required for its rapid degradation following meiosis II. In terms of tissue distribution, exclusively expressed in the hermaphrodite gonad. Expressed prior to oocyte division. Widely distributed throughout gonadal oocytes from the mitotic stage to the developing diakinesis stage. Expressed in sperm.

It localises to the cytoplasm. The protein resides in the cytoplasmic granule. It is found in the nucleus. Zinc-finger RNA-binding protein that binds to 5'-UA[AU]-3' motifs in the 3'-UTR of maternal mRNAs to suppress translation in oocytes and embryos. Acts as a ribonucleoprotein particle component that may exert part of its function within cytoplasmic foci of unfertilized oocytes. Acts redundantly with oma-2 to control the temporal expression and distribution of maternal proteins and thereby promote meiotic progression, oocyte maturation, fertilization and embryonic development. Recruits the translational repressor ifet-1 to the 3'-UTR of mei-1 and zif-1 to negatively regulate their translation. By suppressing the translation of the E3 ligase zif-1, may in turn play a role in the stabilization of zif-1 targets such as the maternal transcriptional repressor protein pie-1. Following fertilization, sequesters the transcription initiation factor, taf-4, in the cytoplasm, which prevents its nuclear localization and thus allows for transcriptional suppression in early embryos, but not in oocytes. Also, together with oma-2, is involved in P-granule distribution during embryonic development. The chain is CCCH-type zinc finger protein oma-1 from Caenorhabditis elegans.